We begin with the raw amino-acid sequence, 163 residues long: Phosphopantetheine adenylyltransferase (163 aa).

Substrate is bound at residue serine 10. ATP is bound by residues 10–11 (SF) and histidine 18. Substrate contacts are provided by lysine 42, leucine 78, and lysine 92. ATP-binding positions include 93–95 (GVR), glutamate 103, and 127–133 (HAHVSSS).

It belongs to the bacterial CoaD family. Homohexamer. Requires Mg(2+) as cofactor.

It localises to the cytoplasm. The enzyme catalyses (R)-4'-phosphopantetheine + ATP + H(+) = 3'-dephospho-CoA + diphosphate. It functions in the pathway cofactor biosynthesis; coenzyme A biosynthesis; CoA from (R)-pantothenate: step 4/5. Functionally, reversibly transfers an adenylyl group from ATP to 4'-phosphopantetheine, yielding dephospho-CoA (dPCoA) and pyrophosphate. This Clavibacter michiganensis subsp. michiganensis (strain NCPPB 382) protein is Phosphopantetheine adenylyltransferase.